A 246-amino-acid polypeptide reads, in one-letter code: 3'(2'),5'-bisphosphate nucleotidase CysQ (246 aa).

Positions 64, 83, 85, 86, and 205 each coordinate Mg(2+). Residue E64 participates in substrate binding. Substrate contacts are provided by residues 85-88 (LDGT) and D205.

Belongs to the inositol monophosphatase superfamily. CysQ family. It depends on Mg(2+) as a cofactor.

The protein localises to the cell inner membrane. It catalyses the reaction adenosine 3',5'-bisphosphate + H2O = AMP + phosphate. Its function is as follows. Converts adenosine-3',5'-bisphosphate (PAP) to AMP. The polypeptide is 3'(2'),5'-bisphosphate nucleotidase CysQ (Shigella flexneri).